A 111-amino-acid polypeptide reads, in one-letter code: Small ribosomal subunit protein uS10 (111 aa).

The protein belongs to the universal ribosomal protein uS10 family. As to quaternary structure, part of the 30S ribosomal subunit.

Involved in the binding of tRNA to the ribosomes. This Xanthomonas euvesicatoria pv. vesicatoria (strain 85-10) (Xanthomonas campestris pv. vesicatoria) protein is Small ribosomal subunit protein uS10.